The following is a 428-amino-acid chain: Oxysterol-binding protein 9 (428 aa).

The span at 1 to 11 shows a compositional bias: polar residues; it reads MTEVQSITTSG. Disordered stretches follow at residues 1–32 and 396–428; these read MTEV…STTN and ALIE…KNQK. The span at 18-32 shows a compositional bias: low complexity; that stretch reads SPSSSSSSISSSTTN. Residues 389-422 are a coiled coil; it reads EEAKKYKALIEDNQRKQKKEKDEKLKKDEKLKKE.

The protein belongs to the OSBP family.

In Dictyostelium discoideum (Social amoeba), this protein is Oxysterol-binding protein 9 (osbI).